Consider the following 380-residue polypeptide: Cytochrome b (380 aa).

4 helical membrane passes run 34–54, 78–99, 114–134, and 179–199; these read FGSL…LLAT, WLIR…YLHI, WNTG…GYVL, and FFAL…IHLT. Heme b is bound by residues His84 and His98. Heme b is bound by residues His183 and His197. Residue His202 participates in a ubiquinone binding. Transmembrane regions (helical) follow at residues 227–247, 289–309, 321–341, and 348–368; these read LKDI…ALFS, LGGV…PLLH, FSQF…WVGS, and FIII…LLFP.

Belongs to the cytochrome b family. In terms of assembly, the cytochrome bc1 complex contains 11 subunits: 3 respiratory subunits (MT-CYB, CYC1 and UQCRFS1), 2 core proteins (UQCRC1 and UQCRC2) and 6 low-molecular weight proteins (UQCRH/QCR6, UQCRB/QCR7, UQCRQ/QCR8, UQCR10/QCR9, UQCR11/QCR10 and a cleavage product of UQCRFS1). This cytochrome bc1 complex then forms a dimer. Requires heme b as cofactor.

The protein resides in the mitochondrion inner membrane. Functionally, component of the ubiquinol-cytochrome c reductase complex (complex III or cytochrome b-c1 complex) that is part of the mitochondrial respiratory chain. The b-c1 complex mediates electron transfer from ubiquinol to cytochrome c. Contributes to the generation of a proton gradient across the mitochondrial membrane that is then used for ATP synthesis. This Alle alle (Dovekie) protein is Cytochrome b (MT-CYB).